The chain runs to 860 residues: MIRAKHISNLSSTARSFFLNGSRTSVTDGNSCVYSDDENCVSKRQQLRKEAGQTEKRPSSILPKPSVVGCILPGEVTKPVVPKKVDDFGRPSLLPQHVSSSPALPLKSHSVNYASTVVREEVEGKASSEPIGDQIFKAGIVAVNFLSDLSNCKIPSYDGGSDAFGLPKSCMVDPTRPISSVKSSNVKAIRREHFAKIYPRSAAKESSVGTTRNPSSNFRGAKEAERTGFVKGFRQVSNSVVGKSLPTTNNTYGKRTSVLQRPHIDSNRFVPSGFSNSSVEMMKGPSGTALTSRQYCNSGHIVENVSSVLRRFRWGPAAEEALQNLGLRIDAYQANQVLKQMNDYGNALGFFYWLKRQPGFKHDGHTYTTMVGNLGRAKQFGAINKLLDEMVRDGCQPNTVTYNRLIHSYGRANYLNEAMNVFNQMQEAGCKPDRVTYCTLIDIHAKAGFLDIAMDMYQRMQAGGLSPDTFTYSVIINCLGKAGHLPAAHKLFCEMVDQGCTPNLVTYNIMMDLHAKARNYQNALKLYRDMQNAGFEPDKVTYSIVMEVLGHCGYLEEAEAVFTEMQQKNWIPDEPVYGLLVDLWGKAGNVEKAWQWYQAMLHAGLRPNVPTCNSLLSTFLRVNKIAEAYELLQNMLALGLRPSLQTYTLLLSCCTDGRSKLDMGFCGQLMASTGHPAHMFLLKMPAAGPDGENVRNHANNFLDLMHSEDRESKRGLVDAVVDFLHKSGQKEEAGSVWEVAAQKNVFPDALREKSCSYWLINLHVMSEGTAVTALSRTLAWFRKQMLASGTCPSRIDIVTGWGRRSRVTGTSMVRQAVEELLNIFGSPFFTESGNSGCFVGSGEPLNRWLLQSHVERMHLL.

8 PPR repeats span residues 363 to 397 (DGHT…GCQP), 398 to 432 (NTVT…GCKP), 433 to 467 (DRVT…GLSP), 468 to 502 (DTFT…GCTP), 503 to 537 (NLVT…GFEP), 538 to 572 (DKVT…NWIP), 573 to 607 (DEPV…GLRP), and 608 to 642 (NVPT…GLRP). A Smr domain is found at 760–843 (INLHVMSEGT…NSGCFVGSGE (84 aa)).

Belongs to the PPR family. P subfamily.

This Arabidopsis thaliana (Mouse-ear cress) protein is Pentatricopeptide repeat-containing protein At1g18900.